We begin with the raw amino-acid sequence, 309 residues long: Putative G-protein coupled receptor B0244.4 (309 aa).

6 helical membrane-spanning segments follow: residues 39-59 (SIIF…ACFL), 82-102 (YIFM…MLAL), 114-134 (IYFL…GSYV), 162-182 (FAIA…MFQA), 204-224 (IMLV…SFVL), and 256-276 (WTLF…FYLV).

It belongs to the G-protein coupled receptor 1 family. B0244 subfamily.

The protein localises to the cell membrane. This Caenorhabditis elegans protein is Putative G-protein coupled receptor B0244.4.